The sequence spans 239 residues: Serine protease SplD (239 aa).

Positions 1-36 are cleaved as a signal peptide; sequence MNKNIIIKSIAALTILTSITGVGTTVVDGIQQTAKA. Residues histidine 75, aspartate 114, and serine 192 each act as charge relay system in the active site.

It belongs to the peptidase S1B family.

The protein resides in the secreted. This chain is Serine protease SplD (splD), found in Staphylococcus aureus (strain Mu3 / ATCC 700698).